The sequence spans 573 residues: DNA ligase (573 aa).

Residue E250 coordinates ATP. K252 acts as the N6-AMP-lysine intermediate in catalysis. 6 residues coordinate ATP: R257, R272, E301, F342, R432, and K438.

Belongs to the ATP-dependent DNA ligase family. Mg(2+) is required as a cofactor.

It carries out the reaction ATP + (deoxyribonucleotide)n-3'-hydroxyl + 5'-phospho-(deoxyribonucleotide)m = (deoxyribonucleotide)n+m + AMP + diphosphate.. In terms of biological role, DNA ligase that seals nicks in double-stranded DNA during DNA replication, DNA recombination and DNA repair. This chain is DNA ligase, found in Methanococcus maripaludis (strain C5 / ATCC BAA-1333).